We begin with the raw amino-acid sequence, 735 residues long: Transcription factor RFX4 (735 aa).

Residues 27–59 form a disordered region; it reads NKRYSSHTSLGNVSNDENEEKENNRASKPHSTP. Residues 32-41 show a composition bias toward polar residues; sequence SHTSLGNVSN. The DNA-binding element occupies 44–126; that stretch reads NEEKENNRAS…RRLGTRGQSK (83 aa). Residues 61–136 constitute a DNA-binding region (RFX-type winged-helix); that stretch reads TLQWLEENYE…YHYYGIAVKE (76 aa). The interval 315–487 is necessary for dimerization; it reads RFSQILRRQT…NELMRAMKGE (173 aa). The tract at residues 501–538 is disordered; that stretch reads EATPPTPSPGPSFSPAKSATSVEVPPPSSPVSNPSPEY.

It belongs to the RFX family. As to quaternary structure, homodimer. Heterodimer with RFX2 and RFX3. Binds DNA. Interacts with GPS2. In terms of tissue distribution, isoform 1: Brain-specific. Isoform 2: Testis-specific. Isoform 1: Highly expressed in the suprachiasmatic nucleus, the central pacemaker site of the circadian clock (at protein level).

The protein localises to the nucleus. Its function is as follows. Transcription factor that plays a role in early brain development. May activate transcription by interacting directly with the X-box. May activate transcription from CX3CL1 promoter through the X-box during brain development. May be required for neural tube ciliogenesis during embryogenesis. The chain is Transcription factor RFX4 (Rfx4) from Mus musculus (Mouse).